Here is a 322-residue protein sequence, read N- to C-terminus: Thioredoxin reductase (322 aa).

FAD contacts are provided by residues 12–15 (SGPA), 34–42 (EGAVTAGGA), asparagine 51, and valine 84. An intrachain disulfide couples cysteine 136 to cysteine 139. The NADP(+) site is built by histidine 176, arginine 182, and tyrosine 259. Residues aspartate 279 and 286-289 (RQAI) each bind FAD. Residue arginine 286 participates in NADP(+) binding.

Belongs to the class-II pyridine nucleotide-disulfide oxidoreductase family. Homodimer. The cofactor is FAD.

It carries out the reaction [thioredoxin]-dithiol + NADP(+) = [thioredoxin]-disulfide + NADPH + H(+). Its function is as follows. Component of the thioredoxin-thioredoxin reductase system which may be involved in biosynthesis of penicillins and cephalosporins and may be important in determining the thiol-disulfide redox balance. The polypeptide is Thioredoxin reductase (Streptomyces clavuligerus).